The chain runs to 262 residues: MLLIDAGNTRSKFAWWDADTDKIEILGAIPHQSWLNDLSQPLKDLLLEVVSSRQLEREQQAIGCSVAAVQVMDTLNSSLAELGIKVFWQKTRAQQAGVTNGYTKEPERLGSDRWMALLGCHEQVKQNALIVDAGTALTIDWLMADGRHLGGWIVPGRQLMLNALGQGTANLKGITVNDIERDGLAAGLDTFDGITQGAEAALTGAIAQAIQLSGRYFSDQPFDVVVTGGDGEHLMRTLSVEFCRYDDLLFKGLRLCADNLNS.

5–12 (DAGNTRSK) lines the ATP pocket. Residues Tyr102 and 110 to 113 (GSDR) each bind substrate. Asp112 acts as the Proton acceptor in catalysis. K(+) is bound at residue Asp132. Residue Thr135 participates in ATP binding. Thr190 is a binding site for substrate.

This sequence belongs to the type III pantothenate kinase family. As to quaternary structure, homodimer. NH4(+) serves as cofactor. Requires K(+) as cofactor.

The protein resides in the cytoplasm. It carries out the reaction (R)-pantothenate + ATP = (R)-4'-phosphopantothenate + ADP + H(+). The protein operates within cofactor biosynthesis; coenzyme A biosynthesis; CoA from (R)-pantothenate: step 1/5. Functionally, catalyzes the phosphorylation of pantothenate (Pan), the first step in CoA biosynthesis. The chain is Type III pantothenate kinase from Idiomarina loihiensis (strain ATCC BAA-735 / DSM 15497 / L2-TR).